The sequence spans 105 residues: UPF0235 protein RAF_ORF1191 (105 aa).

Belongs to the UPF0235 family.

The protein is UPF0235 protein RAF_ORF1191 of Rickettsia africae (strain ESF-5).